We begin with the raw amino-acid sequence, 569 residues long: Phospholipase B-like protein D (569 aa).

An N-terminal signal peptide occupies residues 1–22; it reads MIIFKNLLKLLIILLTIKLYFC. N-linked (GlcNAc...) asparagine glycosylation is found at asparagine 93, asparagine 126, asparagine 181, asparagine 425, and asparagine 430.

This sequence belongs to the phospholipase B-like family.

It localises to the secreted. Functionally, probable phospholipase. The polypeptide is Phospholipase B-like protein D (plbD) (Dictyostelium discoideum (Social amoeba)).